The following is a 423-amino-acid chain: Type II methyltransferase M.NlaIV (423 aa).

The 420-residue stretch at 4-423 (IKFIDLFSGM…AVSERLLHTL (420 aa)) folds into the SAM-dependent MTase C5-type domain. C80 is an active-site residue.

This sequence belongs to the class I-like SAM-binding methyltransferase superfamily. C5-methyltransferase family.

The enzyme catalyses a 2'-deoxycytidine in DNA + S-adenosyl-L-methionine = a 5-methyl-2'-deoxycytidine in DNA + S-adenosyl-L-homocysteine + H(+). In terms of biological role, a methylase that recognizes the double-stranded sequence 5'-GGNNCC-3', methylates C-? on both strands, and protects the DNA from cleavage by the NlaIV endonuclease. In Neisseria lactamica, this protein is Type II methyltransferase M.NlaIV (nlaIVM).